Reading from the N-terminus, the 367-residue chain is MSFLATLKEPGTSVCLKNEPAQSPSLHDHAPSTAAISREYIANLFDMPFMDLLLKAQGVHRQHFTANAVQISTLLSIKTGNCPEDCGYCSQSGHHRDTTGLQAEKRLEIDKVIAAAKRAKASGSSRFCMGAAWKHPSAKDMPYVAELIKEVKALGLETCMTLGMLTAEQSEQLAEAGLDYYNHNLDTSRRYYDEVVSTRSYDERLQTINHVRKSGINVCSGSIVGMGESREDRIDWVLELASMPLPPESIPVNLLVPIQGTPLGDKVLSEGQLPVLEWIRTIAVTRICCPSSYVRLSAGRESLSDAEQALAFMAGANSFFYGDKLLTTGNASQSNDDRMMQMLGLIPEAPKPKLTVIDALSGHQSQL.

Positions 67–291 constitute a Radical SAM core domain; it reads NAVQISTLLS…IAVTRICCPS (225 aa). Residues C82, C86, and C89 each contribute to the [4Fe-4S] cluster site. Positions 128, 159, 219, and 295 each coordinate [2Fe-2S] cluster.

The protein belongs to the radical SAM superfamily. Biotin synthase family. As to quaternary structure, homodimer. Requires [4Fe-4S] cluster as cofactor. [2Fe-2S] cluster is required as a cofactor.

It catalyses the reaction (4R,5S)-dethiobiotin + (sulfur carrier)-SH + 2 reduced [2Fe-2S]-[ferredoxin] + 2 S-adenosyl-L-methionine = (sulfur carrier)-H + biotin + 2 5'-deoxyadenosine + 2 L-methionine + 2 oxidized [2Fe-2S]-[ferredoxin]. It participates in cofactor biosynthesis; biotin biosynthesis; biotin from 7,8-diaminononanoate: step 2/2. Catalyzes the conversion of dethiobiotin (DTB) to biotin by the insertion of a sulfur atom into dethiobiotin via a radical-based mechanism. The protein is Biotin synthase of Psychrobacter sp. (strain PRwf-1).